We begin with the raw amino-acid sequence, 333 residues long: N-acetyl-gamma-glutamyl-phosphate reductase (333 aa).

Cysteine 136 is an active-site residue.

This sequence belongs to the NAGSA dehydrogenase family. Type 1 subfamily.

The protein localises to the cytoplasm. It catalyses the reaction N-acetyl-L-glutamate 5-semialdehyde + phosphate + NADP(+) = N-acetyl-L-glutamyl 5-phosphate + NADPH + H(+). Its pathway is amino-acid biosynthesis; L-arginine biosynthesis; N(2)-acetyl-L-ornithine from L-glutamate: step 3/4. Catalyzes the NADPH-dependent reduction of N-acetyl-5-glutamyl phosphate to yield N-acetyl-L-glutamate 5-semialdehyde. The protein is N-acetyl-gamma-glutamyl-phosphate reductase of Xylella fastidiosa (strain 9a5c).